Here is a 203-residue protein sequence, read N- to C-terminus: tRNA (pseudouridine(54)-N(1))-methyltransferase (203 aa).

S-adenosyl-L-methionine is bound by residues Leu-135 and Gly-156.

The protein belongs to the methyltransferase superfamily. TrmY family. In terms of assembly, homodimer.

It is found in the cytoplasm. It catalyses the reaction pseudouridine(54) in tRNA + S-adenosyl-L-methionine = N(1)-methylpseudouridine(54) in tRNA + S-adenosyl-L-homocysteine + H(+). Its function is as follows. Specifically catalyzes the N1-methylation of pseudouridine at position 54 (Psi54) in tRNAs. The polypeptide is tRNA (pseudouridine(54)-N(1))-methyltransferase (Thermococcus onnurineus (strain NA1)).